We begin with the raw amino-acid sequence, 630 residues long: Conserved oligomeric Golgi complex subunit 6 (630 aa).

Belongs to the COG6 family. Component of the conserved oligomeric Golgi complex which is composed of eight different subunits and is required for normal Golgi morphology and localization.

It is found in the golgi apparatus membrane. Functionally, required for normal Golgi function. The protein is Conserved oligomeric Golgi complex subunit 6 of Drosophila melanogaster (Fruit fly).